The chain runs to 276 residues: Triple specificity protein phosphatase PtpB (276 aa).

The active-site Phosphocysteine intermediate is the Cys160. Residues 232–250 (LGVRAEYLAAARQTIDETY) form a UIM-like region region.

This sequence belongs to the protein-tyrosine phosphatase family. Interacts (via UIM-like region) with host ubiquitin; activating the phosphatidylinositol phosphate phosphatase activity.

The protein resides in the secreted. Its subcellular location is the host cytoplasm. The protein localises to the host cell membrane. The catalysed reaction is O-phospho-L-tyrosyl-[protein] + H2O = L-tyrosyl-[protein] + phosphate. The enzyme catalyses O-phospho-L-seryl-[protein] + H2O = L-seryl-[protein] + phosphate. It carries out the reaction O-phospho-L-threonyl-[protein] + H2O = L-threonyl-[protein] + phosphate. It catalyses the reaction 1,2-dioctanoyl-sn-glycero-3-phospho-(1-D-myo-inositol-3-phosphate) + H2O = 1,2-dioctanoyl-sn-glycero-3-phospho-(1D-myo-inositol) + phosphate. The catalysed reaction is 1,2-dioctanoyl-sn-glycero-3-phospho-(1-D-myo-inositol-4-phosphate) + H2O = 1,2-dioctanoyl-sn-glycero-3-phospho-(1D-myo-inositol) + phosphate. The enzyme catalyses 1,2-dioctanoyl-sn-glycero-3-phospho-(1D-myo-inositol-5-phosphate) + H2O = 1,2-dioctanoyl-sn-glycero-3-phospho-(1D-myo-inositol) + phosphate. Binding to host ubiquitin is required to activate the phosphatidylinositol phosphate phosphatase activity. Phosphatase activity is inhibited by sodium orthovanadate, a specific inhibitor of tyrosine phosphatases, but not by okadaic acid, an inhibitor of serine/threonine phosphatases. Inhibition of the enzyme reduces mycobacterial survival in infected macrophages. Inhibitors also enhance killing efficacy by first-line antibiotics. Essential virulence factor that promotes mycobacterial survival within host macrophages. Acts as a phosphatase that possesses triple substrate specificity toward phosphotyrosine, phosphoserine/threonine and phosphoinositides. Supports mycobacteria survival during infection by modulating the normal host signaling pathways, attenuating the bactericidal immune responses and promoting the host cell survival. Inhibits host pyroptosis by disrupting the membrane localization of host gasdermin-D (GSDMD): acts by catalyzing dephosphorylation of phosphatidylinositol (4,5)-bisphosphate and phosphatidylinositol 4-phosphate, thereby inhibiting the membrane targeting of GSDMD and subsequent cytokine release and pyroptosis. Inhibits host inflammatory responses and apoptosis through impeding the NF-kappa-B and MAPK signal pathways and TP53/p53 expression in the macrophage. Blocks the IL6/IL-6 production by down-regulating ERK1/2, p38 and p65 activity. Prevents macrophage cell death by activating the Akt pathway and blocking caspase 3 activity. Reduces the expression of iNOS in activated macrophages and inhibits the generation of destroying reactive nitrogen intermediate NO. The polypeptide is Triple specificity protein phosphatase PtpB (Mycobacterium tuberculosis (strain ATCC 25618 / H37Rv)).